The following is a 454-amino-acid chain: Exodeoxyribonuclease 7 large subunit (454 aa).

Residues 337–352 (ANQRQQRASQRLRQQN) are compositionally biased toward low complexity. The interval 337-359 (ANQRQQRASQRLRQQNPQPRIHR) is disordered.

It belongs to the XseA family. In terms of assembly, heterooligomer composed of large and small subunits.

The protein resides in the cytoplasm. The enzyme catalyses Exonucleolytic cleavage in either 5'- to 3'- or 3'- to 5'-direction to yield nucleoside 5'-phosphates.. Functionally, bidirectionally degrades single-stranded DNA into large acid-insoluble oligonucleotides, which are then degraded further into small acid-soluble oligonucleotides. This chain is Exodeoxyribonuclease 7 large subunit, found in Salmonella arizonae (strain ATCC BAA-731 / CDC346-86 / RSK2980).